We begin with the raw amino-acid sequence, 501 residues long: Actin-binding protein WASF3 (501 aa).

The stretch at 57–93 (NEANNFYIRANSLQDRIDRLAVKVTQLDSTVEEVSLQ) forms a coiled coil. At tyrosine 151 the chain carries Phosphotyrosine; by ABL1. Residues 162–206 (KEKMLQDTEDKRKEKRRQKEQKRVDGTTREVKKVRKARNRRQEWN) are a coiled coil. Residues 170 to 443 (EDKRKEKRRQ…PPISDARSDL (274 aa)) form a disordered region. The segment covering 182–192 (QKRVDGTTREV) has biased composition (basic and acidic residues). Positions 219-237 (RLSQSVHHGASSEGSLSPD) are enriched in polar residues. Tyrosine 248 carries the phosphotyrosine; by ABL1 modification. The segment covering 256–267 (HALQAQPATPSY) has biased composition (polar residues). Residues 302-312 (QQPPPPPPPQA) are compositionally biased toward pro residues. A Phosphotyrosine; by ABL1 modification is found at tyrosine 337. 2 stretches are compositionally biased toward pro residues: residues 341 to 352 (SGPPPPPPPPMI) and 394 to 410 (APPPPGPPPPPPGPPGP). The segment covering 411–422 (SSLSSSPMHGPP) has biased composition (low complexity). One can recognise a WH2 domain in the interval 439-456 (ARSDLLAAIRMGIQLKKV). Position 485 is a phosphotyrosine; by ABL1 (tyrosine 485).

This sequence belongs to the SCAR/WAVE family. Binds actin and the Arp2/3 complex. In terms of processing, phosphorylation by ABL1 promotes lamellipodia formation and cell migration.

It localises to the cytoplasm. The protein resides in the cytoskeleton. In terms of biological role, downstream effector molecules involved in the transmission of signals from tyrosine kinase receptors and small GTPases to the actin cytoskeleton. Plays a role in the regulation of cell morphology and cytoskeletal organization. Required in the control of cell shape. The polypeptide is Actin-binding protein WASF3 (Wasf3) (Mus musculus (Mouse)).